We begin with the raw amino-acid sequence, 121 residues long: Large ribosomal subunit protein bL12 (121 aa).

It belongs to the bacterial ribosomal protein bL12 family. As to quaternary structure, homodimer. Part of the ribosomal stalk of the 50S ribosomal subunit. Forms a multimeric L10(L12)X complex, where L10 forms an elongated spine to which 2 to 4 L12 dimers bind in a sequential fashion. Binds GTP-bound translation factors.

Its function is as follows. Forms part of the ribosomal stalk which helps the ribosome interact with GTP-bound translation factors. Is thus essential for accurate translation. This is Large ribosomal subunit protein bL12 from Halalkalibacterium halodurans (strain ATCC BAA-125 / DSM 18197 / FERM 7344 / JCM 9153 / C-125) (Bacillus halodurans).